The primary structure comprises 181 residues: Large ribosomal subunit protein uL5 (181 aa).

Belongs to the universal ribosomal protein uL5 family. In terms of assembly, part of the 50S ribosomal subunit; part of the 5S rRNA/L5/L18/L25 subcomplex. Contacts the 5S rRNA and the P site tRNA. Forms a bridge to the 30S subunit in the 70S ribosome.

Its function is as follows. This is one of the proteins that bind and probably mediate the attachment of the 5S RNA into the large ribosomal subunit, where it forms part of the central protuberance. In the 70S ribosome it contacts protein S13 of the 30S subunit (bridge B1b), connecting the 2 subunits; this bridge is implicated in subunit movement. Contacts the P site tRNA; the 5S rRNA and some of its associated proteins might help stabilize positioning of ribosome-bound tRNAs. This is Large ribosomal subunit protein uL5 from Helicobacter pylori (strain G27).